The following is a 356-amino-acid chain: NF-kappa-B inhibitor beta (356 aa).

A phosphoserine; by RPS6KA1 mark is found at serine 19 and serine 23. ANK repeat units lie at residues 57 to 86 (DGDT…GTEY), 93 to 122 (LGQT…GLCV), and 126 to 155 (RGHT…RRPR). Residues 149–193 (PRPRRPREAPDTYLAQGPDRTPDTNHTPVALYPDSDLEKEEEESE) form a disordered region. The residue at position 183 (serine 183) is a Phosphoserine. Acidic residues predominate over residues 183–193 (SDLEKEEEESE). ANK repeat units lie at residues 206–235 (EGHT…DLDK), 240–269 (CGRS…NPAA), and 273–302 (GGRT…PEPE). Positions 298-356 (APEPEGEDEKSGPCSSSSDSDSGDEGDEYDDIVVHSSRSQTRLPPTPASKPLPDDPRPV) are disordered. Phosphoserine; by CK2 is present on residues serine 313 and serine 315. Residues 318 to 328 (DSGDEGDEYDD) are compositionally biased toward acidic residues.

It belongs to the NF-kappa-B inhibitor family. As to quaternary structure, interacts with THRB (via ligand-binding domain). Interacts with RELA and REL. Interacts with COMMD1. Interacts with inhibitor kappa B-interacting Ras-like NKIRAS1 and NKIRAS2. In terms of processing, phosphorylated by RPS6KA1; followed by degradation. Interaction with NKIRAS1 and NKIRAS2 probably prevents phosphorylation. Expressed in all tissues examined.

The protein resides in the cytoplasm. It is found in the nucleus. Its function is as follows. Inhibits NF-kappa-B by complexing with and trapping it in the cytoplasm. However, the unphosphorylated form resynthesized after cell stimulation is able to bind NF-kappa-B allowing its transport to the nucleus and protecting it to further NFKBIA-dependent inactivation. Association with inhibitor kappa B-interacting NKIRAS1 and NKIRAS2 prevent its phosphorylation rendering it more resistant to degradation, explaining its slower degradation. In Homo sapiens (Human), this protein is NF-kappa-B inhibitor beta (NFKBIB).